Reading from the N-terminus, the 193-residue chain is ATP synthase subunit b (193 aa).

A helical membrane pass occupies residues I35–F55.

It belongs to the ATPase B chain family. F-type ATPases have 2 components, F(1) - the catalytic core - and F(0) - the membrane proton channel. F(1) has five subunits: alpha(3), beta(3), gamma(1), delta(1), epsilon(1). F(0) has three main subunits: a(1), b(2) and c(10-14). The alpha and beta chains form an alternating ring which encloses part of the gamma chain. F(1) is attached to F(0) by a central stalk formed by the gamma and epsilon chains, while a peripheral stalk is formed by the delta and b chains.

The protein localises to the cell membrane. Functionally, f(1)F(0) ATP synthase produces ATP from ADP in the presence of a proton or sodium gradient. F-type ATPases consist of two structural domains, F(1) containing the extramembraneous catalytic core and F(0) containing the membrane proton channel, linked together by a central stalk and a peripheral stalk. During catalysis, ATP synthesis in the catalytic domain of F(1) is coupled via a rotary mechanism of the central stalk subunits to proton translocation. In terms of biological role, component of the F(0) channel, it forms part of the peripheral stalk, linking F(1) to F(0). In Mycoplasmopsis synoviae (strain 53) (Mycoplasma synoviae), this protein is ATP synthase subunit b.